The sequence spans 302 residues: tRNA pseudouridine synthase B (302 aa).

Catalysis depends on D43, which acts as the Nucleophile.

It belongs to the pseudouridine synthase TruB family. Type 1 subfamily.

The catalysed reaction is uridine(55) in tRNA = pseudouridine(55) in tRNA. In terms of biological role, responsible for synthesis of pseudouridine from uracil-55 in the psi GC loop of transfer RNAs. In Burkholderia pseudomallei (strain 668), this protein is tRNA pseudouridine synthase B.